A 198-amino-acid chain; its full sequence is uncharacterized protein (198 aa).

This is an uncharacterized protein from Acheta domesticus (House cricket).